The following is a 447-amino-acid chain: MQGETMSKTYHFIGIKGSGMSALALMLHQMGHKVQGSDVEKYYFTQRGLEQAGIPILPFDEKNITEDVELIAGNAFREDNNVEIAYAIKNGYKFKRYHEFLGHFMNQFTSFGVAGAHGKTSTTGLLSHSMKNITDTSYLIGDGTGRGSANAQYFVFEADEYERHFMPYHPAYSIITNIDFDHPDYFTSIDDVFSAFDDYAKQVQKGLFVYGEDSNLRKITSNAPIYYYGFEENDDFMATDIIRTTTGSNFKVKHDGQIIGEFHVPAYGRHNILNATAVIANLYVAGFDMALVAEHLKTFSGVKRRFTEKIISDTVIIDDFAHHPTEIIATLDAARQKYPSKEIVAIFQPHTFTRTIALLDDFAEALNEADAVYLAQIYGSAREVDHGDVKVEDLAAKINKPAKVVTVENVSPLLDHDNAIYVFMGAGDIQLYERSFEELLASLQTHM.

115–121 serves as a coordination point for ATP; it reads GAHGKTS.

This sequence belongs to the MurCDEF family.

The protein localises to the cytoplasm. It catalyses the reaction UDP-N-acetyl-alpha-D-muramate + L-alanine + ATP = UDP-N-acetyl-alpha-D-muramoyl-L-alanine + ADP + phosphate + H(+). Its pathway is cell wall biogenesis; peptidoglycan biosynthesis. In terms of biological role, cell wall formation. The sequence is that of UDP-N-acetylmuramate--L-alanine ligase from Streptococcus thermophilus (strain CNRZ 1066).